A 274-amino-acid polypeptide reads, in one-letter code: Cytochrome b-c1 complex subunit Rieske, mitochondrial (274 aa).

Residues 79 to 103 lie on the Mitochondrial matrix side of the membrane; the sequence is SHTDVKVPDFYDYRRLEVLDSTKSS. The helical transmembrane segment at 104 to 140 threads the bilayer; that stretch reads RESSEARKGFSYLVTAVTTVGVAYAAKNVVTQFISSM. Residues 141–274 lie on the Mitochondrial intermembrane side of the membrane; that stretch reads SASADVLAMA…FTGDDVVVVG (134 aa). Residues 187-272 enclose the Rieske domain; the sequence is EAAVELSQLR…YEFTGDDVVV (86 aa). Residues cysteine 217, histidine 219, cysteine 236, histidine 239, and serine 241 each contribute to the [2Fe-2S] cluster site. Cysteine 222 and cysteine 238 are joined by a disulfide.

Belongs to the Rieske iron-sulfur protein family. In terms of assembly, component of the ubiquinol-cytochrome c oxidoreductase (cytochrome b-c1 complex, complex III, CIII), a multisubunit enzyme composed of 11 subunits. The complex is composed of 3 respiratory subunits cytochrome b, cytochrome c1 and Rieske protein UQCRFS1, 2 core protein subunits UQCRC1/QCR1 and UQCRC2/QCR2, and 6 low-molecular weight protein subunits UQCRH/QCR6, UQCRB/QCR7, UQCRQ/QCR8, UQCR10/QCR9, UQCR11/QCR10 and subunit 9, the cleavage product of Rieske protein UQCRFS1. The complex exists as an obligatory dimer and forms supercomplexes (SCs) in the inner mitochondrial membrane with NADH-ubiquinone oxidoreductase (complex I, CI) and cytochrome c oxidase (complex IV, CIV), resulting in different assemblies (supercomplex SCI(1)III(2)IV(1) and megacomplex MCI(2)III(2)IV(2)). Incorporation of the Rieske protein UQCRFS1 is the penultimate step in complex III assembly. Interacts with TTC19, which is involved in the clearance of UQCRFS1 fragments. Component of the ubiquinol-cytochrome c oxidoreductase (cytochrome b-c1 complex, complex III, CIII). Subunit 9 corresponds to the mitochondrial targeting sequence (MTS) of Rieske protein UQCRFS1. It is retained after processing and incorporated inside complex III, where it remains bound to the complex and localizes between the 2 core subunits UQCRC1/QCR1 and UQCRC2/QCR2. Requires [2Fe-2S] cluster as cofactor. Post-translationally, proteolytic processing is necessary for the correct insertion of UQCRFS1 in the complex III dimer. Several fragments are generated during UQCRFS1 insertion, most probably due to the endogenous matrix-processing peptidase (MPP) activity of the 2 core protein subunits UQCRC1/QCR1 and UQCRC2/QCR2, which are homologous to the 2 mitochondrial-processing peptidase (MPP) subunits beta-MPP and alpha-MPP respectively. The action of the protease is also necessary for the clearance of the UQCRFS1 fragments.

It is found in the mitochondrion inner membrane. It catalyses the reaction a quinol + 2 Fe(III)-[cytochrome c](out) = a quinone + 2 Fe(II)-[cytochrome c](out) + 2 H(+)(out). In terms of biological role, component of the ubiquinol-cytochrome c oxidoreductase, a multisubunit transmembrane complex that is part of the mitochondrial electron transport chain which drives oxidative phosphorylation. The respiratory chain contains 3 multisubunit complexes succinate dehydrogenase (complex II, CII), ubiquinol-cytochrome c oxidoreductase (cytochrome b-c1 complex, complex III, CIII) and cytochrome c oxidase (complex IV, CIV), that cooperate to transfer electrons derived from NADH and succinate to molecular oxygen, creating an electrochemical gradient over the inner membrane that drives transmembrane transport and the ATP synthase. The cytochrome b-c1 complex catalyzes electron transfer from ubiquinol to cytochrome c, linking this redox reaction to translocation of protons across the mitochondrial inner membrane, with protons being carried across the membrane as hydrogens on the quinol. In the process called Q cycle, 2 protons are consumed from the matrix, 4 protons are released into the intermembrane space and 2 electrons are passed to cytochrome c. The Rieske protein is a catalytic core subunit containing a [2Fe-2S] iron-sulfur cluster. It cycles between 2 conformational states during catalysis to transfer electrons from the quinol bound in the Q(0) site in cytochrome b to cytochrome c1. Incorporation of UQCRFS1 is the penultimate step in complex III assembly. Its function is as follows. Component of the ubiquinol-cytochrome c oxidoreductase (cytochrome b-c1 complex, complex III, CIII). UQCRFS1 undergoes proteolytic processing once it is incorporated in the complex III dimer. One of the fragments, called subunit 9, corresponds to its mitochondrial targeting sequence (MTS). The proteolytic processing is necessary for the correct insertion of UQCRFS1 in the complex III dimer, but the persistence of UQCRFS1-derived fragments may prevent newly imported UQCRFS1 to be processed and assembled into complex III and is detrimental for the complex III structure and function. This is Cytochrome b-c1 complex subunit Rieske, mitochondrial (UQCRFS1) from Chlorocebus aethiops (Green monkey).